An 842-amino-acid chain; its full sequence is Outer membrane usher protein AggC (842 aa).

The N-terminal stretch at 1–21 (MKTSSFIIVILLCFRIENVIA) is a signal peptide. The cysteines at positions 819 and 841 are disulfide-linked.

The protein belongs to the fimbrial export usher family.

It is found in the cell outer membrane. Its function is as follows. Involved in the export and assembly of the AAF/I fimbriae subunits across the outer membrane. The polypeptide is Outer membrane usher protein AggC (aggC) (Escherichia coli).